We begin with the raw amino-acid sequence, 291 residues long: Formamidopyrimidine-DNA glycosylase (291 aa).

The Schiff-base intermediate with DNA role is filled by proline 2. The active-site Proton donor is glutamate 3. Residue lysine 61 is the Proton donor; for beta-elimination activity of the active site. 3 residues coordinate DNA: histidine 103, arginine 123, and arginine 165. Residues glutamate 251 to proline 285 form an FPG-type zinc finger. The active-site Proton donor; for delta-elimination activity is the arginine 275.

The protein belongs to the FPG family. As to quaternary structure, monomer. It depends on Zn(2+) as a cofactor.

It carries out the reaction Hydrolysis of DNA containing ring-opened 7-methylguanine residues, releasing 2,6-diamino-4-hydroxy-5-(N-methyl)formamidopyrimidine.. The enzyme catalyses 2'-deoxyribonucleotide-(2'-deoxyribose 5'-phosphate)-2'-deoxyribonucleotide-DNA = a 3'-end 2'-deoxyribonucleotide-(2,3-dehydro-2,3-deoxyribose 5'-phosphate)-DNA + a 5'-end 5'-phospho-2'-deoxyribonucleoside-DNA + H(+). Functionally, involved in base excision repair of DNA damaged by oxidation or by mutagenic agents. Acts as a DNA glycosylase that recognizes and removes damaged bases. Has a preference for oxidized purines, such as 7,8-dihydro-8-oxoguanine (8-oxoG). Has AP (apurinic/apyrimidinic) lyase activity and introduces nicks in the DNA strand. Cleaves the DNA backbone by beta-delta elimination to generate a single-strand break at the site of the removed base with both 3'- and 5'-phosphates. The polypeptide is Formamidopyrimidine-DNA glycosylase (Parafrankia sp. (strain EAN1pec)).